We begin with the raw amino-acid sequence, 701 residues long: Acetyl-coenzyme A synthetase, cytoplasmic (701 aa).

Residues 1–26 (MGLPEERRKSGSGSRAREETGAEGRV) are compositionally biased toward basic and acidic residues. The segment at 1–37 (MGLPEERRKSGSGSRAREETGAEGRVRGWSPPPEVRR) is disordered. Positions 1–107 (MGLPEERRKS…GATTNICYNV (107 aa)) are interaction with TFEB. S30 is subject to Phosphoserine. Residue 219–222 (RGEK) participates in CoA binding. A phosphoserine mark is found at S263, S265, and S267. T363 contributes to the CoA binding site. An N6-acetyllysine modification is found at K418. Residues 439–441 (GEP), 463–468 (DTFWQT), D552, and R567 contribute to the ATP site. Residues S575 and R636 each coordinate CoA. Positions 656 to 668 (KTRSGKIMRRVLR) match the Nuclear localization signal motif. Phosphoserine; by AMPK is present on S659. An N6-acetyllysine modification is found at K661.

Belongs to the ATP-dependent AMP-binding enzyme family. In terms of assembly, monomer. Interacts with TFEB. AMPK-mediated phosphorylated form at Ser-659 interacts with KPNA1; this interaction results in nuclear translocation of ACSS2. Interacts with the 'Thr-172' phosphorylated form of PRKAA2. Interacts with CREBBP. In terms of processing, reversibly acetylated at Lys-661. The acetyl-CoA synthase activity is inhibited by acetylation and activated by deacetylation mediated by the deacetylases SIRT1 and SIRT3. In terms of tissue distribution, expressed in the hippocampus.

It localises to the cytoplasm. The protein localises to the cytosol. It is found in the nucleus. The catalysed reaction is acetate + ATP + CoA = acetyl-CoA + AMP + diphosphate. It catalyses the reaction propanoate + ATP + CoA = propanoyl-CoA + AMP + diphosphate. Its activity is regulated as follows. Inhibited by acetylation at Lys-661 and activated by deacetylation mediated by the deacetylases SIRT1 and SIRT3. Its function is as follows. Catalyzes the synthesis of acetyl-CoA from short-chain fatty acids. Acetate is the preferred substrate but can also utilize propionate with a much lower affinity. Nuclear ACSS2 promotes glucose deprivation-induced lysosomal biogenesis and autophagy, tumor cell survival and brain tumorigenesis. Glucose deprivation results in AMPK-mediated phosphorylation of ACSS2 leading to its translocation to the nucleus where it binds to TFEB and locally produces acetyl-CoA for histone acetylation in the promoter regions of TFEB target genes thereby activating their transcription. The regulation of genes associated with autophagy and lysosomal activity through ACSS2 is important for brain tumorigenesis and tumor survival. Acts as a chromatin-bound transcriptional coactivator that up-regulates histone acetylation and expression of neuronal genes. Can be recruited to the loci of memory-related neuronal genes to maintain a local acetyl-CoA pool, providing the substrate for histone acetylation and promoting the expression of specific genes, which is essential for maintaining long-term spatial memory. The protein is Acetyl-coenzyme A synthetase, cytoplasmic (Acss2) of Mus musculus (Mouse).